The sequence spans 467 residues: MTARTPIRTRFAPSPTGYLHVGGARTALFSWAYARHFGGTFVLRIEDTDLERSTPEAVQAIIEGMEWLGLHHDEGPFYQMQRMDRYREVIAQMLAAGTAYYCYSSSEEVEAMRERQRAAGEKPRYDGTWRPEAGKTLPAIPADRKPVVRFRNPMEGDVTWLDVVKGQITISNRELDDLVIARQDGTPTYNFCVAVDDSDMKITHVIRGDDHVNNTPRQINILKALGAELPHYGHLPMILGADGAKLSKRHGAVSVMDYPAQGYLPEAMLNYLARLGWSHGDDEVFSMEQFTEWFDLDHLTKSPAQFDPEKLDWINNHYIKQADNTRLAGLIKPMMENLGAQFDNAPDLPAVIGLMKERVKTLNELAVTAMLFYRQPAPDAALLTQHLTDAVKPALAQYVEQLKTVAWGKDALSAALKEVLATHKLKMPQLAMPLRLIITGQLQTPSIDAVVELFGREVVLARIANYL.

Residues proline 13–glycine 23 carry the 'HIGH' region motif. A 'KMSKS' region motif is present at residues lysine 245–arginine 249. Position 248 (lysine 248) interacts with ATP.

The protein belongs to the class-I aminoacyl-tRNA synthetase family. Glutamate--tRNA ligase type 1 subfamily. In terms of assembly, monomer.

It is found in the cytoplasm. It catalyses the reaction tRNA(Glu) + L-glutamate + ATP = L-glutamyl-tRNA(Glu) + AMP + diphosphate. Its function is as follows. Catalyzes the attachment of glutamate to tRNA(Glu) in a two-step reaction: glutamate is first activated by ATP to form Glu-AMP and then transferred to the acceptor end of tRNA(Glu). This Herminiimonas arsenicoxydans protein is Glutamate--tRNA ligase.